The following is a 154-amino-acid chain: UPF0039 protein sll0451 (154 aa).

The 144-residue stretch at 8–151 folds into the N-acetyltransferase domain; the sequence is QRFNDISGEA…EHISMIFRVP (144 aa).

This sequence belongs to the UPF0039 (ElaA) family.

This is UPF0039 protein sll0451 from Synechocystis sp. (strain ATCC 27184 / PCC 6803 / Kazusa).